The sequence spans 360 residues: Peptide chain release factor 1 (360 aa).

Position 235 is an N5-methylglutamine (Q235).

Belongs to the prokaryotic/mitochondrial release factor family. Post-translationally, methylated by PrmC. Methylation increases the termination efficiency of RF1.

The protein localises to the cytoplasm. Peptide chain release factor 1 directs the termination of translation in response to the peptide chain termination codons UAG and UAA. This is Peptide chain release factor 1 from Leptothrix cholodnii (strain ATCC 51168 / LMG 8142 / SP-6) (Leptothrix discophora (strain SP-6)).